Consider the following 230-residue polypeptide: Sugar fermentation stimulation protein homolog (230 aa).

Belongs to the SfsA family.

The polypeptide is Sugar fermentation stimulation protein homolog (Ruegeria pomeroyi (strain ATCC 700808 / DSM 15171 / DSS-3) (Silicibacter pomeroyi)).